Consider the following 245-residue polypeptide: Small ribosomal subunit protein uS2 (245 aa).

Belongs to the universal ribosomal protein uS2 family.

In Pseudomonas fluorescens (strain Pf0-1), this protein is Small ribosomal subunit protein uS2.